A 293-amino-acid chain; its full sequence is Acetylglutamate kinase (293 aa).

Residues 70-71, arginine 92, and asparagine 186 contribute to the substrate site; that span reads GG.

This sequence belongs to the acetylglutamate kinase family. ArgB subfamily.

The protein resides in the cytoplasm. It carries out the reaction N-acetyl-L-glutamate + ATP = N-acetyl-L-glutamyl 5-phosphate + ADP. Its pathway is amino-acid biosynthesis; L-arginine biosynthesis; N(2)-acetyl-L-ornithine from L-glutamate: step 2/4. In terms of biological role, catalyzes the ATP-dependent phosphorylation of N-acetyl-L-glutamate. In Synechococcus sp. (strain CC9605), this protein is Acetylglutamate kinase.